A 943-amino-acid chain; its full sequence is Isoleucine--tRNA ligase (943 aa).

The short motif at 59-69 (PYANGQIHLGH) is the 'HIGH' region element. Glu-577 is a binding site for L-isoleucyl-5'-AMP. The 'KMSKS' region motif lies at 618–622 (KMSKS). Lys-621 is an ATP binding site. The Zn(2+) site is built by Cys-906, Cys-909, Cys-926, and Cys-929.

This sequence belongs to the class-I aminoacyl-tRNA synthetase family. IleS type 1 subfamily. In terms of assembly, monomer. Zn(2+) is required as a cofactor.

It localises to the cytoplasm. It catalyses the reaction tRNA(Ile) + L-isoleucine + ATP = L-isoleucyl-tRNA(Ile) + AMP + diphosphate. Catalyzes the attachment of isoleucine to tRNA(Ile). As IleRS can inadvertently accommodate and process structurally similar amino acids such as valine, to avoid such errors it has two additional distinct tRNA(Ile)-dependent editing activities. One activity is designated as 'pretransfer' editing and involves the hydrolysis of activated Val-AMP. The other activity is designated 'posttransfer' editing and involves deacylation of mischarged Val-tRNA(Ile). This Xanthomonas campestris pv. campestris (strain B100) protein is Isoleucine--tRNA ligase.